The sequence spans 345 residues: NADPH dehydrogenase (345 aa).

Residue Ser23–Cys26 coordinates FMN. Tyr28 contacts substrate. Positions 60 and 102 each coordinate FMN. His164–His167 contacts substrate. FMN contacts are provided by residues Arg215 and Gly307–Arg308.

It belongs to the NADH:flavin oxidoreductase/NADH oxidase family. NamA subfamily. Homotetramer. Requires FMN as cofactor.

It carries out the reaction A + NADPH + H(+) = AH2 + NADP(+). Catalyzes the reduction of the double bond of an array of alpha,beta-unsaturated aldehydes and ketones. It also reduces the nitro group of nitroester and nitroaromatic compounds. It could have a role in detoxification processes. The chain is NADPH dehydrogenase from Bacillus mycoides (strain KBAB4) (Bacillus weihenstephanensis).